A 307-amino-acid chain; its full sequence is Protease HtpX homolog 1 (307 aa).

Transmembrane regions (helical) follow at residues 7–27 (LKTL…IITY) and 38–60 (IFTA…YLVG). His-133 lines the Zn(2+) pocket. Residue Glu-134 is part of the active site. His-137 is a Zn(2+) binding site. The next 2 helical transmembrane spans lie at 145 to 165 (IGMA…FLLF) and 180 to 200 (LILG…TFLL). Glu-212 lines the Zn(2+) pocket.

It belongs to the peptidase M48B family. Requires Zn(2+) as cofactor.

The protein localises to the cell membrane. This chain is Protease HtpX homolog 1, found in Sulfolobus acidocaldarius (strain ATCC 33909 / DSM 639 / JCM 8929 / NBRC 15157 / NCIMB 11770).